The primary structure comprises 202 residues: LexA repressor (202 aa).

Positions 28 to 48 (RAEIAQRLGFRSPNAAEEHLK) form a DNA-binding region, H-T-H motif. Residues S119 and K156 each act as for autocatalytic cleavage activity in the active site.

The protein belongs to the peptidase S24 family. In terms of assembly, homodimer.

It carries out the reaction Hydrolysis of Ala-|-Gly bond in repressor LexA.. In terms of biological role, represses a number of genes involved in the response to DNA damage (SOS response), including recA and lexA. Binds to the 16 bp palindromic sequence 5'-CTGTATATATATACAG-3'. In the presence of single-stranded DNA, RecA interacts with LexA causing an autocatalytic cleavage which disrupts the DNA-binding part of LexA, leading to derepression of the SOS regulon and eventually DNA repair. The chain is LexA repressor from Enterobacter sp. (strain 638).